Here is a 227-residue protein sequence, read N- to C-terminus: Thymidylate kinase (227 aa).

7–14 (GIEGSGKT) contributes to the ATP binding site.

The protein belongs to the thymidylate kinase family.

The catalysed reaction is dTMP + ATP = dTDP + ADP. Functionally, phosphorylation of dTMP to form dTDP in both de novo and salvage pathways of dTTP synthesis. This is Thymidylate kinase from Desulforapulum autotrophicum (strain ATCC 43914 / DSM 3382 / VKM B-1955 / HRM2) (Desulfobacterium autotrophicum).